A 254-amino-acid chain; its full sequence is Tabinhibitin 6 (254 aa).

Residues Met1–Ala22 form the signal peptide. The Cell attachment site motif lies at Arg31 to Asp33. The SCP domain occupies Leu66–Phe210.

Belongs to the CRISP family. As to expression, expressed in salivary glands.

Its subcellular location is the secreted. Functionally, inhibits platelet aggregation induced by all agonists tested (ADP, arachidonic acid, the thromboxane A2 analog U46619, thrombin, and snake venom snaclecs (TMVA that activates platelet through GPIB, and stejnulxin that specifically acts through GPVI (GP6))). May act by competing with fibrinogen for binding to glycoprotein IIb/IIIa (ITGA2B/ITGB3). This chain is Tabinhibitin 6, found in Tabanus yao (Horsefly).